A 428-amino-acid chain; its full sequence is UDP-N-acetylglucosamine 1-carboxyvinyltransferase (428 aa).

Phosphoenolpyruvate is bound at residue 25–26; it reads KN. Arg-102 provides a ligand contact to UDP-N-acetyl-alpha-D-glucosamine. Catalysis depends on Cys-126, which acts as the Proton donor. Residue Cys-126 is modified to 2-(S-cysteinyl)pyruvic acid O-phosphothioketal. Residues Asp-316 and Val-338 each contribute to the UDP-N-acetyl-alpha-D-glucosamine site.

It belongs to the EPSP synthase family. MurA subfamily.

It localises to the cytoplasm. It carries out the reaction phosphoenolpyruvate + UDP-N-acetyl-alpha-D-glucosamine = UDP-N-acetyl-3-O-(1-carboxyvinyl)-alpha-D-glucosamine + phosphate. It participates in cell wall biogenesis; peptidoglycan biosynthesis. Cell wall formation. Adds enolpyruvyl to UDP-N-acetylglucosamine. This Anaplasma marginale (strain Florida) protein is UDP-N-acetylglucosamine 1-carboxyvinyltransferase.